Reading from the N-terminus, the 289-residue chain is Thymidylate synthase (289 aa).

DUMP is bound by residues R21 and 150-151 (RR). C170 functions as the Nucleophile in the catalytic mechanism. DUMP-binding positions include 191–194 (RSAD), N202, and 232–234 (HIY). (6R)-5,10-methylene-5,6,7,8-tetrahydrofolate is bound at residue D194. A288 provides a ligand contact to (6R)-5,10-methylene-5,6,7,8-tetrahydrofolate.

This sequence belongs to the thymidylate synthase family. Bacterial-type ThyA subfamily. As to quaternary structure, homodimer.

It localises to the cytoplasm. The enzyme catalyses dUMP + (6R)-5,10-methylene-5,6,7,8-tetrahydrofolate = 7,8-dihydrofolate + dTMP. Its pathway is pyrimidine metabolism; dTTP biosynthesis. Catalyzes the reductive methylation of 2'-deoxyuridine-5'-monophosphate (dUMP) to 2'-deoxythymidine-5'-monophosphate (dTMP) while utilizing 5,10-methylenetetrahydrofolate (mTHF) as the methyl donor and reductant in the reaction, yielding dihydrofolate (DHF) as a by-product. This enzymatic reaction provides an intracellular de novo source of dTMP, an essential precursor for DNA biosynthesis. The polypeptide is Thymidylate synthase (Malacoplasma penetrans (strain HF-2) (Mycoplasma penetrans)).